The chain runs to 66 residues: Cysteine proteinase inhibitor (66 aa).

A Secondary area of contact motif is present at residues 18 to 22; that stretch reads QVVAG.

It belongs to the cystatin family. Phytocystatin subfamily. As to expression, in tubers of untreated plants. After ABA treatment or mechanical wounding is mostly accumulated in leaves, to a lesser extent in stems, but not in roots.

The chain is Cysteine proteinase inhibitor (CYS-PIN) from Solanum tuberosum (Potato).